Here is a 635-residue protein sequence, read N- to C-terminus: Allantoin permease (635 aa).

Residues 1–144 (MANDALSAIF…AGTGLQLGLN (144 aa)) lie on the Cytoplasmic side of the membrane. The chain crosses the membrane as a helical span at residues 145 to 165 (WWQCWLTVWIGYTFAGIFVVL). Residues 166 to 174 (NSRFGSAYH) lie on the Extracellular side of the membrane. The helical transmembrane segment at 175 to 195 (LSFPITVRASFGIFFSMWPII) threads the bilayer. Residues 196–198 (NRV) lie on the Cytoplasmic side of the membrane. A helical transmembrane segment spans residues 199 to 219 (VMAIVWYAVQAWLGATPVALM). The Extracellular portion of the chain corresponds to 220-243 (LKSIFGKNLEDRIPNHFGSPNSTT). A helical membrane pass occupies residues 244 to 264 (FEFMCFFIFWVVSIPFVLVAP). Residues 265 to 269 (HKIRH) are Cytoplasmic-facing. Residues 270–290 (LFTVKAALIPFAAFGFLIWAL) traverse the membrane as a helical segment. The Extracellular portion of the chain corresponds to 291–311 (KKSHGKIELGTLNDYSPHGSE). A helical membrane pass occupies residues 312 to 332 (FSWIFVRSLMACVANFAALII). At 333 to 351 (NAPDFGRFAKNPQASLWPQ) the chain is on the cytoplasmic side. Residues 352–372 (LVAIPLFFAITCLIGIIVTAA) form a helical membrane-spanning segment. The Extracellular portion of the chain corresponds to 373–401 (GYHLYGVNYWSPLDVLGQFLETTYTRGTR). The helical transmembrane segment at 402 to 422 (AGVFLISFVFALAQLGTNISA) threads the bilayer. The Cytoplasmic portion of the chain corresponds to 423–443 (NSLACGADMTALFPRYINIRR). A helical transmembrane segment spans residues 444 to 464 (GSLFCVAMALCICPWNLMASS). At 465–466 (SK) the chain is on the extracellular side. A helical membrane pass occupies residues 467-487 (FTSALGAYAIFLSSIAGVICA). The Cytoplasmic portion of the chain corresponds to 488 to 522 (DYFVVRRGYVKLTHLFLAQKGSFYMFGNKFGANWR). Residues 523-543 (AFVAYICGIAPNLPGFIGDVG) traverse the membrane as a helical segment. Residues 544–560 (APKITVSEGAMRLYYLG) lie on the Extracellular side of the membrane. Residues 561–581 (YPVGFFISAVIYLILCYFFPV) form a helical membrane-spanning segment. The Cytoplasmic segment spans residues 582–635 (PGTPVTNFLTEKGWFQRWAYVEDFEQDWKNELRRDDLCDDTVSIYDGTEEKIVY).

It belongs to the purine-cytosine permease (2.A.39) family.

Its subcellular location is the membrane. Transport of allantoin. This Saccharomyces cerevisiae (strain ATCC 204508 / S288c) (Baker's yeast) protein is Allantoin permease (DAL4).